Here is a 153-residue protein sequence, read N- to C-terminus: Large ribosomal subunit protein uL22 (153 aa).

Belongs to the universal ribosomal protein uL22 family. As to quaternary structure, part of the 50S ribosomal subunit.

Its function is as follows. This protein binds specifically to 23S rRNA. It makes multiple contacts with different domains of the 23S rRNA in the assembled 50S subunit and ribosome. The globular domain of the protein is located near the polypeptide exit tunnel on the outside of the subunit, while an extended beta-hairpin is found that lines the wall of the exit tunnel in the center of the 70S ribosome. In Methanococcus aeolicus (strain ATCC BAA-1280 / DSM 17508 / OCM 812 / Nankai-3), this protein is Large ribosomal subunit protein uL22.